The following is a 551-amino-acid chain: Harmonin (551 aa).

The tract at residues Met-1–Lys-86 is N-terminal domain. PDZ domains are found at residues Glu-87–Leu-169 and Lys-211–Gly-293. The mediates interaction with MYO7B stretch occupies residues Gly-194–Ile-532. Ser-219 bears the Phosphoserine mark. Positions Leu-318–Asp-377 form a coiled coil. The tract at residues Lys-401–Arg-425 is disordered. The segment covering Val-408–Asp-419 has biased composition (acidic residues). One can recognise a PDZ 3 domain in the interval Asp-452–Val-536.

In terms of assembly, part of the IMAC/intermicrovillar adhesion complex/intermicrovillar tip-link complex composed of ANKS4B, MYO7B, USH1C, CDHR2 and CDHR5. Part of a complex composed of USH1C, USH1G and MYO7A. Interacts with F-actin. Interacts with USH2A. Interacts with SLC4A7. Interacts (via PDZ1 domain) with the C-terminus of USHBP1. Interacts (via N-terminus and PDZ 2 domain) with CDH23. Interacts with USH1G. Interacts with MYO7B. Interacts with CDHR2 and CDHR5; may mediate their interaction with MYO7B at the microvilli tip. Interacts (via PDZ 1 domain) with ANKS4B. Interacts (via PDZ 1 domain) with DOCK4.

It localises to the cytoplasm. The protein resides in the cytosol. The protein localises to the cytoskeleton. Its subcellular location is the cell projection. It is found in the microvillus. Functionally, anchoring/scaffolding protein that is a part of the functional network formed by USH1C, USH1G, CDH23 and MYO7A that mediates mechanotransduction in cochlear hair cells. Required for normal development and maintenance of cochlear hair cell bundles. As part of the intermicrovillar adhesion complex/IMAC plays a role in brush border differentiation, controlling microvilli organization and length. Probably plays a central regulatory role in the assembly of the complex, recruiting CDHR2, CDHR5 and MYO7B to the microvilli tips. This is Harmonin (USH1C) from Bos taurus (Bovine).